The following is a 345-amino-acid chain: Acyl-CoA--sterol O-acyltransferase 1 (345 aa).

9 helical membrane-spanning segments follow: residues 1–21 (MASFIKAWGLVIISLCYTFFI), 32–52 (LILFFPVFLIFFIVPFLIYSL), 54–74 (LLGITAFFIAWLANFKLLLFA), 86–106 (PLSLPIFLAVSCLPIKIQLSP), 120–140 (GPLIYTIKAVFVVLIIKAYEY), 148–168 (VVLTLYAIHIYFALEIILAAT), 231–251 (ILAAFGTFVVSGIMHELIFFY), 258–278 (DWKMMWFFLINGFCTTVEIAI), and 291–311 (AISQVLTLTFVMVTALWLFLP).

It belongs to the wax synthase family.

It is found in the membrane. Functionally, involved in the esterification of cycloartenol. Not implicated in the formation of sterol esters in flowers or during seed maturation. Has a substrate preference toward saturated fatty acyl donors (16:0 &gt; 18:0 &gt; 16:1 &gt; 18:1). Does not require triacyglycerols (TAGs) as a fatty acyl donor, and is unable to acylate diacylglycerol to produce TAG. The chain is Acyl-CoA--sterol O-acyltransferase 1 (ASAT1) from Arabidopsis thaliana (Mouse-ear cress).